The following is a 367-amino-acid chain: Cobalt-precorrin-5B C(1)-methyltransferase (367 aa).

The protein belongs to the CbiD family.

It catalyses the reaction Co-precorrin-5B + S-adenosyl-L-methionine = Co-precorrin-6A + S-adenosyl-L-homocysteine. Its pathway is cofactor biosynthesis; adenosylcobalamin biosynthesis; cob(II)yrinate a,c-diamide from sirohydrochlorin (anaerobic route): step 6/10. Its function is as follows. Catalyzes the methylation of C-1 in cobalt-precorrin-5B to form cobalt-precorrin-6A. In Thermosynechococcus vestitus (strain NIES-2133 / IAM M-273 / BP-1), this protein is Cobalt-precorrin-5B C(1)-methyltransferase.